The primary structure comprises 423 residues: Histidine--tRNA ligase (423 aa).

Belongs to the class-II aminoacyl-tRNA synthetase family. As to quaternary structure, homodimer.

The protein resides in the cytoplasm. The catalysed reaction is tRNA(His) + L-histidine + ATP = L-histidyl-tRNA(His) + AMP + diphosphate + H(+). The chain is Histidine--tRNA ligase from Orientia tsutsugamushi (strain Ikeda) (Rickettsia tsutsugamushi).